Here is an 814-residue protein sequence, read N- to C-terminus: Protein kinase C-binding protein NELL2 (814 aa).

A signal peptide spans 1-19 (MEFILGIFCVLFCLRAGAG). Asn51, Asn223, and Asn296 each carry an N-linked (GlcNAc...) asparagine glycan. A Laminin G-like domain is found at 53-226 (SKAFLFQDTS…SQCPDLNRTC (174 aa)). The VWFC 1 domain occupies 270–329 (RSCTVKGNIYRELESWMDGCKKCTCTNGTAQCETLTCSAPNCLSGFSPAYVPGKCCKECQ). Positions 395 to 437 (GHDFCSEGHNCMGYSICKNLDDKAVCICRDGFRALREDNAYCE) constitute an EGF-like 1 domain. 3 cysteine pairs are disulfide-bonded: Cys399–Cys411, Cys405–Cys420, and Cys422–Cys436. Positions 438, 439, and 441 each coordinate Ca(2+). Positions 438–479 (DIDECTEGRHYCRENTVCVNTPGSFMCVCQTGYLKIDDYSCT) constitute an EGF-like 2; calcium-binding domain. 9 disulfide bridges follow: Cys442–Cys455, Cys449–Cys464, Cys466–Cys478, Cys484–Cys497, Cys491–Cys506, Cys508–Cys519, Cys523–Cys533, Cys527–Cys539, and Cys541–Cys550. Asn457, Thr458, and Ser461 together coordinate Ca(2+). One can recognise an EGF-like 3; calcium-binding domain in the interval 480-520 (EHNECATNQHSCDENAMCFNTVGGHNCVCQPGYTGNGTDCR). N-linked (GlcNAc...) asparagine glycosylation is present at Asn515. The 31-residue stretch at 521–551 (AFCKDGCRNGGTCIAPNICACPQGFTGPSCE) folds into the EGF-like 4 domain. Ca(2+) is bound by residues Asp553, Ile554, and Glu556. The EGF-like 5; calcium-binding domain occupies 553 to 599 (DIDECTEGFVQCDSRANCINLPGWYHCECRDGYHDNGMFSLGGESCE). 3 disulfide bridges follow: Cys557-Cys570, Cys564-Cys579, and Cys581-Cys598. Asn572, Leu573, and Trp576 together coordinate Ca(2+). Ca(2+) contacts are provided by Asp600, Ile601, and Glu603. One can recognise an EGF-like 6; calcium-binding domain in the interval 600–635 (DIDECATGRHSCSNDTVCFNLDGGFDCRCPHGKNCS). 3 cysteine pairs are disulfide-bonded: Cys604/Cys617, Cys611/Cys626, and Cys628/Cys634. Residue Asn613 is glycosylated (N-linked (GlcNAc...) asparagine). Asn619, Leu620, and Gly623 together coordinate Ca(2+). Asn633 carries N-linked (GlcNAc...) asparagine glycosylation. 2 consecutive VWFC domains span residues 636 to 691 (GDCT…PECD) and 696 to 754 (SQCL…PRCV).

Homotrimer.

It is found in the secreted. Its function is as follows. May regulate neuronal differentiation, polarization and axon guidance. This Xenopus laevis (African clawed frog) protein is Protein kinase C-binding protein NELL2 (nell2.L).